Reading from the N-terminus, the 80-residue chain is Metallothionein-like protein BIF98 (80 aa).

The protein belongs to the metallothionein superfamily. Type 15 family.

Functionally, metallothioneins have a high content of cysteine residues that bind various heavy metals. This chain is Metallothionein-like protein BIF98, found in Brassica rapa subsp. pekinensis (Chinese cabbage).